The chain runs to 115 residues: Dolichyl-diphosphooligosaccharide--protein glycosyltransferase subunit DAD1 (115 aa).

Residues 1 to 31 (MARSTSKDAQALIQSLRSAYAATPSNLKIID) lie on the Cytoplasmic side of the membrane. A helical transmembrane segment spans residues 32 to 52 (LYVVFAVFTALIQVVYMAIVG). Over 53-55 (SFP) the chain is Lumenal. A helical membrane pass occupies residues 56–76 (FNAFLSGLLSCIGTAVLAVCL). Residues 77–94 (RIQVNKENKEFKDLAPER) lie on the Cytoplasmic side of the membrane. The helical transmembrane segment at 95–115 (AFADFVLCNLVLHLVIMNFLG) threads the bilayer.

This sequence belongs to the DAD/OST2 family. In terms of assembly, component of the oligosaccharyltransferase (OST) complex.

It localises to the endoplasmic reticulum membrane. It participates in protein modification; protein glycosylation. In terms of biological role, subunit of the oligosaccharyl transferase (OST) complex that catalyzes the initial transfer of a defined glycan (Glc(3)Man(9)GlcNAc(2) in eukaryotes) from the lipid carrier dolichol-pyrophosphate to an asparagine residue within an Asn-X-Ser/Thr consensus motif in nascent polypeptide chains, the first step in protein N-glycosylation. N-glycosylation occurs cotranslationally and the complex associates with the Sec61 complex at the channel-forming translocon complex that mediates protein translocation across the endoplasmic reticulum (ER). All subunits are required for a maximal enzyme activity. The sequence is that of Dolichyl-diphosphooligosaccharide--protein glycosyltransferase subunit DAD1 (DAD1) from Betula pendula (European white birch).